A 203-amino-acid chain; its full sequence is Holliday junction branch migration complex subunit RuvA (203 aa).

The interval 1 to 64 (MIGRLNGILV…EDAQLLYGFI (64 aa)) is domain I. The domain II stretch occupies residues 65-143 (TKQERALFRL…SLLEASVGNE (79 aa)). The tract at residues 144 to 154 (REFMLQTNYTA) is flexible linker. Residues 155-203 (PAANAEEDAISALVSLGYKPPQASRAVSKAYKEGMDTETLIKLALKSML) form a domain III region.

Belongs to the RuvA family. In terms of assembly, homotetramer. Forms an RuvA(8)-RuvB(12)-Holliday junction (HJ) complex. HJ DNA is sandwiched between 2 RuvA tetramers; dsDNA enters through RuvA and exits via RuvB. An RuvB hexamer assembles on each DNA strand where it exits the tetramer. Each RuvB hexamer is contacted by two RuvA subunits (via domain III) on 2 adjacent RuvB subunits; this complex drives branch migration. In the full resolvosome a probable DNA-RuvA(4)-RuvB(12)-RuvC(2) complex forms which resolves the HJ.

It is found in the cytoplasm. Functionally, the RuvA-RuvB-RuvC complex processes Holliday junction (HJ) DNA during genetic recombination and DNA repair, while the RuvA-RuvB complex plays an important role in the rescue of blocked DNA replication forks via replication fork reversal (RFR). RuvA specifically binds to HJ cruciform DNA, conferring on it an open structure. The RuvB hexamer acts as an ATP-dependent pump, pulling dsDNA into and through the RuvAB complex. HJ branch migration allows RuvC to scan DNA until it finds its consensus sequence, where it cleaves and resolves the cruciform DNA. The chain is Holliday junction branch migration complex subunit RuvA from Shewanella denitrificans (strain OS217 / ATCC BAA-1090 / DSM 15013).